Here is a 213-residue protein sequence, read N- to C-terminus: Holliday junction resolvase RecU (213 aa).

Positions 99, 101, 114, and 133 each coordinate Mg(2+).

It belongs to the RecU family. Mg(2+) is required as a cofactor.

It is found in the cytoplasm. It catalyses the reaction Endonucleolytic cleavage at a junction such as a reciprocal single-stranded crossover between two homologous DNA duplexes (Holliday junction).. In terms of biological role, endonuclease that resolves Holliday junction intermediates in genetic recombination. Cleaves mobile four-strand junctions by introducing symmetrical nicks in paired strands. Promotes annealing of linear ssDNA with homologous dsDNA. Required for DNA repair, homologous recombination and chromosome segregation. The protein is Holliday junction resolvase RecU of Lactococcus lactis subsp. lactis (strain IL1403) (Streptococcus lactis).